We begin with the raw amino-acid sequence, 32 residues long: Potassium channel toxin alpha-KTx 10.2 (32 aa).

Intrachain disulfides connect C3/C22, C8/C12, and C27/C29. Y32 carries the post-translational modification Tyrosine amide.

Belongs to the short scorpion toxin superfamily. Potassium channel inhibitor family. Alpha-KTx 10 subfamily. Expressed by the venom gland.

The protein resides in the secreted. Blocks Shaker B potassium-channels (Kv1.1/KCNA1 sub-family). The chain is Potassium channel toxin alpha-KTx 10.2 from Centruroides noxius (Mexican scorpion).